We begin with the raw amino-acid sequence, 240 residues long: NADPH-flavin oxidoreductase (240 aa).

Residues 11-15, Ser-39, 67-69, 128-131, and 167-169 each bind FMN; these read HRSIR, QAY, YIGG, and KPR.

The protein belongs to the flavin oxidoreductase frp family. As to quaternary structure, homodimer.

The enzyme catalyses FMNH2 + NADP(+) = FMN + NADPH + 2 H(+). Its function is as follows. Catalyzes the NADPH-dependent reduction of FMN to FMNH(2). Involved in bioluminescence by providing FMNH(2) to luciferase. This chain is NADPH-flavin oxidoreductase, found in Vibrio harveyi (Beneckea harveyi).